A 362-amino-acid polypeptide reads, in one-letter code: Protein mab-21-like 3 (362 aa).

Belongs to the mab-21 family.

This Homo sapiens (Human) protein is Protein mab-21-like 3 (MAB21L3).